A 965-amino-acid chain; its full sequence is Transmembrane channel-like protein 5 (965 aa).

Composition is skewed to polar residues over residues 1-10 and 20-31; these read MSSFHKNSSY and SGSQNHTQNYLR. The disordered stretch occupies residues 1–235; that stretch reads MSSFHKNSSY…GAEEGDVYSP (235 aa). The Extracellular segment spans residues 1–417; the sequence is MSSFHKNSSY…YFSFLRWLLK (417 aa). Basic and acidic residues predominate over residues 61 to 70; the sequence is TNPDYHHSLA. A compositionally biased stretch (polar residues) spans 166-181; that stretch reads QGNSYHSGPRSHSNLP. A Phosphoserine modification is found at Ser-248. A helical transmembrane segment spans residues 418-438; sequence FNIFSFVMNFSFIIIPQFTVG. The Cytoplasmic portion of the chain corresponds to 439–444; that stretch reads EKNTLQ. A helical transmembrane segment spans residues 445-467; sequence FTGLEFFTGAGYFRETVMYYGFY. Residues 468-484 are Extracellular-facing; that stretch reads TNSTIRHRMGGASYNMQ. Residues 485–505 form a helical membrane-spanning segment; that stretch reads LAYIFTIGACLVICFFSLLFS. Over 506-578 the chain is Cytoplasmic; it reads MAKYFRNNFI…NQKLTRFSVH (73 aa). A helical membrane pass occupies residues 579 to 599; the sequence is VAAWLVSTGITAACCVAVYYL. Residues 600-613 lie on the Extracellular side of the membrane; sequence AEYNSEFLKTHKNP. The helical transmembrane segment at 614 to 634 threads the bilayer; the sequence is GAVLLLPFVVSCINLAVPRFY. Residues 635–657 are Cytoplasmic-facing; the sequence is SMFRLVERYEIPRQEVYVLLIRN. A helical transmembrane segment spans residues 658–678; it reads IFLKISIVGILCYYWLNIVAL. Topologically, residues 679–691 are extracellular; it reads SGEECWETLIGQD. The chain crosses the membrane as a helical span at residues 692 to 712; it reads IYRLLLMDFVFSLADSLLGEF. At 713 to 747 the chain is on the cytoplasmic side; the sequence is LRRLIGMKFITSLSLQEFDIARNVLELIYAQTLAW. A helical transmembrane segment spans residues 748–768; it reads LGIFFCPLLPFIQMITLFIMF. Over 769–794 the chain is Extracellular; that stretch reads YVKNVSLMMNFQPPSKAWRASQMITF. A helical membrane pass occupies residues 795-815; the sequence is FIFLLFFPSFTGVLCTLAITI. Over 816–859 the chain is Cytoplasmic; sequence WRLKPSADCGPFRGLPSFIQSIYSWIDTLSHRPGYLWVVWIYQN. Residues 860 to 880 traverse the membrane as a helical segment; sequence LIGSVHFFFILTLIVLIITYL. The Extracellular segment spans residues 881 to 965; sequence YWQITEGRKV…RSMQEENAIA (85 aa).

Belongs to the TMC family.

The protein resides in the membrane. Probable component of an ion channel. Molecular function hasn't been characterized yet. The protein is Transmembrane channel-like protein 5 of Rattus norvegicus (Rat).